The primary structure comprises 1816 residues: Nuclear pore complex protein Nup98-Nup96 (1816 aa).

Residues 1-156 (MFNKSFGTPF…LFGPSSFTAA (156 aa)) are FG repeats 1. Positions 157 to 213 (PTGTTIKFNPPTGTDTMVKAGVSTNISTKHQCITAMKEYESKSLEELRLEDYQANRK) are GLEBS; interaction with RAE1. Residues 214 to 480 (GPQNQVGAGT…NTSTAILGFG (267 aa)) are FG repeats 2. Positions 512–535 (PFGDSPLFRNPMSDPKKKEERLKP) are disordered. At Ser524 the chain carries Phosphoserine. A compositionally biased stretch (basic and acidic residues) spans 525 to 534 (DPKKKEERLK). Lys563 is covalently cross-linked (Glycyl lysine isopeptide (Lys-Gly) (interchain with G-Cter in SUMO2)). Lys603 bears the N6-acetyllysine; alternate mark. A Glycyl lysine isopeptide (Lys-Gly) (interchain with G-Cter in SUMO2); alternate cross-link involves residue Lys603. Phosphoserine is present on residues Ser608, Ser612, Ser618, Ser623, Ser625, and Ser653. A disordered region spans residues 663 to 682 (IAKPIPQTPESAGNKNNSSS). Lys665 participates in a covalent cross-link: Glycyl lysine isopeptide (Lys-Gly) (interchain with G-Cter in SUMO2). Thr670 is subject to Phosphothreonine. Positions 670 to 682 (TPESAGNKNNSSS) are enriched in polar residues. Phosphoserine occurs at positions 673, 680, 681, and 839. In terms of domain architecture, Peptidase S59 spans 738 to 880 (KVGYYTIPSM…GSWVFKVSHF (143 aa)). Residue Ser881 is the Nucleophile of the active site. Residues 886 to 937 (QDSDEEEEEHPPKTTSKKLKTAPLPPAGQATTFQMTLNGKPAPPPQSQSPEV) are disordered. Ser888, Ser934, Ser1027, Ser1042, Ser1059, and Ser1063 each carry phosphoserine. Phosphothreonine is present on Thr1069. Residue Ser1328 is modified to Phosphoserine. The residue at position 1771 (Thr1771) is a Phosphothreonine.

It belongs to the nucleoporin GLFG family. In terms of assembly, part of the nuclear pore complex (NPC). Interacts directly with NUP96. Part of the Nup160 subcomplex in the nuclear pore which is composed of NUP160, NUP133, NUP107 and NUP96; this complex plays a role in RNA export and in tethering NUP98 and NUP153 to the nucleus. Interacts with RAE1. Does not interact with TPR. Interacts directly with NUP88 and NUP214, subunits of the cytoplasmic filaments of the NPC. Interacts (via N-terminus) with DHX9 (via DRBM, OB-fold and RGG domains); this interaction occurs in a RNA-dependent manner and stimulates DHX9-mediated ATPase activity. In terms of processing, the N-terminus is blocked. Isoform 1 is autoproteolytically cleaved to yield Nup98 and Nup96 or Nup98 only, respectively. Cleaved Nup98 is necessary for the targeting of Nup98 to the nuclear pore and the interaction with Nup96.

It localises to the nucleus membrane. It is found in the nucleus. Its subcellular location is the nuclear pore complex. The protein resides in the nucleoplasm. Plays a role in the nuclear pore complex (NPC) assembly and/or maintenance. Involved in the bidirectional transport across the NPC. May anchor NUP153 and TPR to the NPC. In terms of biological role, plays a role in the nuclear pore complex (NPC) assembly and/or maintenance. NUP98 and NUP96 are involved in the bidirectional transport across the NPC. May anchor NUP153 and TPR to the NPC. In cooperation with DHX9, plays a role in transcription and alternative splicing activation of a subset of genes. Involved in the localization of DHX9 in discrete intranuclear foci (GLFG-body). The chain is Nuclear pore complex protein Nup98-Nup96 (Nup98) from Rattus norvegicus (Rat).